We begin with the raw amino-acid sequence, 263 residues long: Small ribosomal subunit protein uS2 (263 aa).

At S2 the chain carries N-acetylserine. Residues 213–223 (NAAEEARAGAT) show a composition bias toward low complexity. The disordered stretch occupies residues 213–245 (NAAEEARAGATEETEEVVAEAETEWNTETNVED). Residues 224–245 (EETEEVVAEAETEWNTETNVED) are compositionally biased toward acidic residues.

It belongs to the universal ribosomal protein uS2 family. Component of the small ribosomal subunit. Mature ribosomes consist of a small (40S) and a large (60S) subunit. The 40S subunit contains about 33 different proteins and 1 molecule of RNA (18S). The 60S subunit contains about 49 different proteins and 3 molecules of RNA (25S, 5.8S and 5S). Interacts with RPS21.

The protein localises to the cytoplasm. In terms of biological role, required for the assembly and/or stability of the 40S ribosomal subunit. Required for the processing of the 20S rRNA-precursor to mature 18S rRNA in a late step of the maturation of 40S ribosomal subunits. The chain is Small ribosomal subunit protein uS2 from Clavispora lusitaniae (strain ATCC 42720) (Yeast).